The chain runs to 80 residues: Defensin-like protein 204 (80 aa).

Positions 1 to 29 (MAKTFSSICFTTLLLVVLFISTEIPKSEA) are cleaved as a signal peptide. Disulfide bonds link Cys43/Cys64, Cys48/Cys73, and Cys52/Cys75.

This sequence belongs to the DEFL family.

The protein resides in the secreted. In Arabidopsis thaliana (Mouse-ear cress), this protein is Defensin-like protein 204.